The primary structure comprises 135 residues: Small ribosomal subunit protein uS9 (135 aa).

Basic and acidic residues predominate over residues 102-115 (PLKTEGHLSRDPRA). Positions 102-135 (PLKTEGHLSRDPRAKERRKYGLKKARKAPQFSKR) are disordered. The segment covering 116–135 (KERRKYGLKKARKAPQFSKR) has biased composition (basic residues).

This sequence belongs to the universal ribosomal protein uS9 family.

The chain is Small ribosomal subunit protein uS9 from Synechococcus sp. (strain CC9311).